The sequence spans 188 residues: Elongation factor P (188 aa).

Lysine 34 is modified (N6-(3,6-diaminohexanoyl)-5-hydroxylysine).

The protein belongs to the elongation factor P family. Is beta-lysylated on the epsilon-amino group of Lys-34 by the combined action of EpmA and EpmB, and then hydroxylated on the C5 position of the same residue by EpmC. Lysylation is critical for the stimulatory effect of EF-P on peptide-bond formation. The lysylation moiety would extend toward the peptidyltransferase center and stabilize the terminal 3-CCA end of the tRNA. The hydroxylation of the C5 position on Lys-34 would allow additional potential stabilizing hydrogen-bond interactions with the P-tRNA.

It is found in the cytoplasm. Its pathway is protein biosynthesis; polypeptide chain elongation. Functionally, involved in peptide bond synthesis. Alleviates ribosome stalling that occurs when 3 or more consecutive Pro residues or the sequence PPG is present in a protein, possibly by augmenting the peptidyl transferase activity of the ribosome. Modification of Lys-34 is required for alleviation. The protein is Elongation factor P of Salmonella arizonae (strain ATCC BAA-731 / CDC346-86 / RSK2980).